The sequence spans 990 residues: Tyrosine-protein phosphatase 3 (990 aa).

4 disordered regions span residues 47 to 88 (QSQS…SPSV), 100 to 193 (NKIN…SNIE), 246 to 414 (PNQQ…SFSQ), and 431 to 452 (KPEM…HNDL). 2 stretches are compositionally biased toward low complexity: residues 52 to 88 (NTNT…SPSV) and 100 to 117 (NKIN…NNNN). Over residues 127 to 136 (LKLSNTMIIK) the composition is skewed to polar residues. Composition is skewed to low complexity over residues 137–191 (NNNN…SNSN), 250–271 (SSSS…SSLL), 278–293 (NNST…NSSN), 310–327 (QAQV…QHQQ), and 334–413 (NLSS…TSFS). Residues 422-715 (MRLEFEMIKK…IFIFKVINDV (294 aa)) enclose the Tyrosine-protein phosphatase domain. Basic residues predominate over residues 437 to 447 (KKSHKHHQRHY). The active-site Phosphocysteine intermediate is the cysteine 650. Residues 786–795 (PPQQQQDNPF) show a composition bias toward polar residues. Disordered stretches follow at residues 786–814 (PPQQ…NISI) and 834–990 (LQQQ…IKCF). Low complexity-rich tracts occupy residues 796–806 (SKSSIKISPSP) and 834–850 (LQQQ…DNPP). The span at 851 to 868 (LNMSSNSIKFPPVTSLSS) shows a compositional bias: polar residues. Composition is skewed to low complexity over residues 878–916 (NDNN…DNNG) and 924–968 (GSFL…SDNN).

The protein belongs to the protein-tyrosine phosphatase family. Non-receptor class subfamily. As to expression, in the anterior-like and prestalk cell types.

It is found in the cytoplasm. It catalyses the reaction O-phospho-L-tyrosyl-[protein] + H2O = L-tyrosyl-[protein] + phosphate. In terms of biological role, seems to dephosphorylate a protein of 130 kDa (p130). The polypeptide is Tyrosine-protein phosphatase 3 (ptpC) (Dictyostelium discoideum (Social amoeba)).